The following is a 211-amino-acid chain: Histidine biosynthesis bifunctional protein HisIE (211 aa).

The segment at 1–118 is phosphoribosyl-AMP cyclohydrolase; it reads MNVDDLTFDD…IYGASDRFGI (118 aa). The interval 119-211 is phosphoribosyl-ATP pyrophosphohydrolase; it reads IATLEALIAE…LEERHRPKEE (93 aa).

It in the N-terminal section; belongs to the PRA-CH family. The protein in the C-terminal section; belongs to the PRA-PH family.

Its subcellular location is the cytoplasm. It catalyses the reaction 1-(5-phospho-beta-D-ribosyl)-ATP + H2O = 1-(5-phospho-beta-D-ribosyl)-5'-AMP + diphosphate + H(+). The catalysed reaction is 1-(5-phospho-beta-D-ribosyl)-5'-AMP + H2O = 1-(5-phospho-beta-D-ribosyl)-5-[(5-phospho-beta-D-ribosylamino)methylideneamino]imidazole-4-carboxamide. It participates in amino-acid biosynthesis; L-histidine biosynthesis; L-histidine from 5-phospho-alpha-D-ribose 1-diphosphate: step 2/9. The protein operates within amino-acid biosynthesis; L-histidine biosynthesis; L-histidine from 5-phospho-alpha-D-ribose 1-diphosphate: step 3/9. This Halalkalibacterium halodurans (strain ATCC BAA-125 / DSM 18197 / FERM 7344 / JCM 9153 / C-125) (Bacillus halodurans) protein is Histidine biosynthesis bifunctional protein HisIE (hisI).